A 348-amino-acid chain; its full sequence is Flagellar P-ring protein (348 aa).

The first 24 residues, 1–24 (MRRKNNNKIWIWVATLILSISALY), serve as a signal peptide directing secretion.

It belongs to the FlgI family. As to quaternary structure, the basal body constitutes a major portion of the flagellar organelle and consists of four rings (L,P,S, and M) mounted on a central rod.

The protein resides in the periplasm. The protein localises to the bacterial flagellum basal body. In terms of biological role, assembles around the rod to form the L-ring and probably protects the motor/basal body from shearing forces during rotation. This is Flagellar P-ring protein from Helicobacter hepaticus (strain ATCC 51449 / 3B1).